Consider the following 444-residue polypeptide: Phosphoribosylamine--glycine ligase (444 aa).

The ATP-grasp domain maps to 109 to 324 (RNLFKKYEID…FLDVCFAIAE (216 aa)). Residue 140-202 (MTSLGKDVVV…EEKLVGVEFT (63 aa)) participates in ATP binding. 3 residues coordinate Mg(2+): Q282, E294, and N296. Q282, E294, and N296 together coordinate Mn(2+).

This sequence belongs to the GARS family. Mg(2+) is required as a cofactor. Mn(2+) serves as cofactor.

It catalyses the reaction 5-phospho-beta-D-ribosylamine + glycine + ATP = N(1)-(5-phospho-beta-D-ribosyl)glycinamide + ADP + phosphate + H(+). The protein operates within purine metabolism; IMP biosynthesis via de novo pathway; N(1)-(5-phospho-D-ribosyl)glycinamide from 5-phospho-alpha-D-ribose 1-diphosphate: step 2/2. This chain is Phosphoribosylamine--glycine ligase, found in Methanococcus maripaludis (strain DSM 14266 / JCM 13030 / NBRC 101832 / S2 / LL).